An 89-amino-acid chain; its full sequence is Small ribosomal subunit protein uS15 (89 aa).

Belongs to the universal ribosomal protein uS15 family. As to quaternary structure, part of the 30S ribosomal subunit. Forms a bridge to the 50S subunit in the 70S ribosome, contacting the 23S rRNA.

One of the primary rRNA binding proteins, it binds directly to 16S rRNA where it helps nucleate assembly of the platform of the 30S subunit by binding and bridging several RNA helices of the 16S rRNA. In terms of biological role, forms an intersubunit bridge (bridge B4) with the 23S rRNA of the 50S subunit in the ribosome. This is Small ribosomal subunit protein uS15 from Chlorobaculum tepidum (strain ATCC 49652 / DSM 12025 / NBRC 103806 / TLS) (Chlorobium tepidum).